A 342-amino-acid chain; its full sequence is C-X-C chemokine receptor type 6 (342 aa).

The Extracellular segment spans residues 1 to 32; it reads MAEHDYHEDYGFSSFNDSSQEEHQDFLQFSKV. Residue N16 is glycosylated (N-linked (GlcNAc...) asparagine). Residues 33-59 form a helical membrane-spanning segment; that stretch reads FLPCMYLVVFVCGLVGNSLVLVISIFY. Topologically, residues 60–68 are cytoplasmic; that stretch reads HKLQSLTDV. A helical transmembrane segment spans residues 69-89; it reads FLVNLPLADLVFVCTLPFWAY. The Extracellular segment spans residues 90–103; it reads AGIHEWVFGQVMCK. C102 and C180 form a disulfide bridge. The helical transmembrane segment at 104–125 threads the bilayer; that stretch reads SLLGIYTINFYTSMLILTCITV. The Cytoplasmic segment spans residues 126-143; that stretch reads DRFIVVVKATKAYNQQAK. The helical transmembrane segment at 144 to 164 threads the bilayer; it reads RMTWGKVTSLLIWVISLLVSL. Residues 165 to 187 lie on the Extracellular side of the membrane; that stretch reads PQIIYGNVFNLDKLICGYHDEAI. Residues 188 to 215 form a helical membrane-spanning segment; it reads STVVLATQMTLGFFLPLLTMIVCYSVII. At 216–231 the chain is on the cytoplasmic side; sequence KTLLHAGGFQKHRSLK. Residues 232–259 traverse the membrane as a helical segment; the sequence is IIFLVMAVFLLTQMPFNLMKFIRSTHWE. The Extracellular segment spans residues 260 to 275; it reads YYAMTSFHYTIMVTEA. A helical membrane pass occupies residues 276–293; the sequence is IAYLRACLNPVLYAFVSL. At 294–342 the chain is on the cytoplasmic side; the sequence is KFRKNFWKLVKDIGCLPYLGVSHQWKSSEDNSKTFSASHNVEATSMFQL.

The protein belongs to the G-protein coupled receptor 1 family. As to expression, expressed in lymphoid tissues and activated T cells.

The protein localises to the cell membrane. Functionally, receptor for the C-X-C chemokine CXCL16. Used as a coreceptor by SIVs and by strains of HIV-2 and m-tropic HIV-1. This is C-X-C chemokine receptor type 6 (CXCR6) from Homo sapiens (Human).